Consider the following 165-residue polypeptide: 6,7-dimethyl-8-ribityllumazine synthase 2 (165 aa).

Residues tryptophan 24, 56-58 (SFE), and 80-82 (LVV) each bind 5-amino-6-(D-ribitylamino)uracil. The active-site Proton donor is the arginine 88. Serine 113 serves as a coordination point for 5-amino-6-(D-ribitylamino)uracil. Histidine 127 contributes to the (2S)-2-hydroxy-3-oxobutyl phosphate binding site.

It belongs to the DMRL synthase family.

It catalyses the reaction (2S)-2-hydroxy-3-oxobutyl phosphate + 5-amino-6-(D-ribitylamino)uracil = 6,7-dimethyl-8-(1-D-ribityl)lumazine + phosphate + 2 H2O + H(+). Its pathway is cofactor biosynthesis; riboflavin biosynthesis; riboflavin from 2-hydroxy-3-oxobutyl phosphate and 5-amino-6-(D-ribitylamino)uracil: step 1/2. In terms of biological role, catalyzes the formation of 6,7-dimethyl-8-ribityllumazine by condensation of 5-amino-6-(D-ribitylamino)uracil with 3,4-dihydroxy-2-butanone 4-phosphate. This is the penultimate step in the biosynthesis of riboflavin. This is 6,7-dimethyl-8-ribityllumazine synthase 2 from Bradyrhizobium diazoefficiens (strain JCM 10833 / BCRC 13528 / IAM 13628 / NBRC 14792 / USDA 110).